A 223-amino-acid chain; its full sequence is UPF0319 protein VPA1584 (223 aa).

Positions 1–21 are cleaved as a signal peptide; it reads MKLIKPLTCALALAMSGMAFA.

It belongs to the UPF0319 family.

The chain is UPF0319 protein VPA1584 from Vibrio parahaemolyticus serotype O3:K6 (strain RIMD 2210633).